A 347-amino-acid chain; its full sequence is Fructose-1,6-bisphosphatase (347 aa).

Residues 19–23 (ILQEQ) and 44–48 (SGELS) each bind AMP. Positions 85 and 114 each coordinate Mg(2+). Residue 127–128 (SY) coordinates AMP. Residues aspartate 133, isoleucine 135, and aspartate 136 each contribute to the Mg(2+) site. 136–139 (DGSS) serves as a coordination point for substrate. Lysine 155 provides a ligand contact to AMP. Residues 227–230 (NEGY), 258–263 (RYIGSM), tyrosine 279, and 288–290 (KLR) contribute to the substrate site. Mg(2+) is bound at residue glutamate 294.

The protein belongs to the FBPase class 1 family. As to quaternary structure, homotetramer. Requires Mg(2+) as cofactor.

It carries out the reaction beta-D-fructose 1,6-bisphosphate + H2O = beta-D-fructose 6-phosphate + phosphate. Its pathway is carbohydrate biosynthesis; gluconeogenesis. Subject to complex allosteric regulation. The enzyme can assume an active R-state, or an inactive T-state. Intermediate conformations may exist. AMP acts as allosteric inhibitor. AMP binding affects the turnover of bound substrate and not the affinity for substrate. The protein is Fructose-1,6-bisphosphatase (fbp1) of Schizosaccharomyces pombe (strain 972 / ATCC 24843) (Fission yeast).